A 474-amino-acid polypeptide reads, in one-letter code: 3-isopropylmalate dehydratase large subunit (474 aa).

[4Fe-4S] cluster contacts are provided by cysteine 353, cysteine 414, and cysteine 417.

It belongs to the aconitase/IPM isomerase family. LeuC type 1 subfamily. In terms of assembly, heterodimer of LeuC and LeuD. Requires [4Fe-4S] cluster as cofactor.

It catalyses the reaction (2R,3S)-3-isopropylmalate = (2S)-2-isopropylmalate. It participates in amino-acid biosynthesis; L-leucine biosynthesis; L-leucine from 3-methyl-2-oxobutanoate: step 2/4. Functionally, catalyzes the isomerization between 2-isopropylmalate and 3-isopropylmalate, via the formation of 2-isopropylmaleate. The chain is 3-isopropylmalate dehydratase large subunit from Pseudomonas aeruginosa (strain LESB58).